We begin with the raw amino-acid sequence, 124 residues long: Putative iron-sulfur cluster insertion protein ErpA (124 aa).

Iron-sulfur cluster contacts are provided by Cys52, Cys116, and Cys118.

This sequence belongs to the HesB/IscA family. In terms of assembly, homodimer. Requires iron-sulfur cluster as cofactor.

Its function is as follows. Required for insertion of 4Fe-4S clusters. The protein is Putative iron-sulfur cluster insertion protein ErpA of Ralstonia nicotianae (strain ATCC BAA-1114 / GMI1000) (Ralstonia solanacearum).